The sequence spans 248 residues: 5'-nucleotidase SurE (248 aa).

A divalent metal cation contacts are provided by aspartate 8, aspartate 9, serine 39, and asparagine 91.

This sequence belongs to the SurE nucleotidase family. A divalent metal cation is required as a cofactor.

The protein localises to the cytoplasm. The enzyme catalyses a ribonucleoside 5'-phosphate + H2O = a ribonucleoside + phosphate. Functionally, nucleotidase that shows phosphatase activity on nucleoside 5'-monophosphates. The protein is 5'-nucleotidase SurE of Neisseria meningitidis serogroup C / serotype 2a (strain ATCC 700532 / DSM 15464 / FAM18).